A 416-amino-acid chain; its full sequence is Thyroid hormone receptor alpha-A (416 aa).

Positions 1-13 (MEPMSNKQDSNSS) are enriched in polar residues. The tract at residues 1-37 (MEPMSNKQDSNSSEGDEKGWPDVPKRKRKNSQCSMKS) is disordered. The tract at residues 1-58 (MEPMSNKQDSNSSEGDEKGWPDVPKRKRKNSQCSMKSMSALSVSVPGYIPSYLEKDEP) is modulating. Over residues 15-24 (GDEKGWPDVP) the composition is skewed to basic and acidic residues. 2 consecutive NR C4-type zinc fingers follow at residues 59-79 (CVVCGDKATGYHYRCITCEGC) and 97-121 (CKYEGCCIIDKITRNQCQLCRFKKC). A DNA-binding region (nuclear receptor) is located at residues 59-126 (CVVCGDKATG…RFKKCISVGM (68 aa)). The NR LBD domain occupies 169–413 (AEWELIRMAT…PPLFLEVFED (245 aa)).

It belongs to the nuclear hormone receptor family. NR1 subfamily.

Its subcellular location is the nucleus. Its function is as follows. High affinity receptor for triiodothyronine. In Paralichthys olivaceus (Bastard halibut), this protein is Thyroid hormone receptor alpha-A (thra1).